The following is a 222-amino-acid chain: CEACAM1-like protein UL7 (222 aa).

N-linked (GlcNAc...) asparagine; by host glycans are attached at residues Asn50, Asn56, Asn60, Asn71, Asn105, Asn109, Asn125, Asn132, Asn147, Asn164, Asn168, and Asn189. A helical membrane pass occupies residues Leu193–Trp213.

Belongs to the RL11 family. As to quaternary structure, interacts with host FLT3. Highly glycosylated.

Its subcellular location is the secreted. It is found in the host cell membrane. Functionally, plays a role in modulating the host immune response and affecting host cytokine production. Structurally and functionally homolog of host CEACAM1, induces endothelial cell angiogenesis. Ligands for host FLT3 receptor, activates the PI3K/AKT and MAPK/ERK pathways. In turn, triggers hematopoietic progenitor cell and monocyte differentiation leading to virus reactivation. This chain is CEACAM1-like protein UL7 (UL7), found in Human cytomegalovirus (strain AD169) (HHV-5).